Here is a 319-residue protein sequence, read N- to C-terminus: tRNA-cytidine(32) 2-sulfurtransferase (319 aa).

A PP-loop motif motif is present at residues 49 to 54; that stretch reads SGGKDS. Residues Cys124, Cys127, and Cys215 each contribute to the [4Fe-4S] cluster site. The disordered stretch occupies residues 276–319; that stretch reads DGDTAFDKEEFRDPAPDADDVEDAPKKRTISILDSRGKESGCGA. 2 stretches are compositionally biased toward basic and acidic residues: residues 280–290 and 310–319; these read AFDKEEFRDPA and SRGKESGCGA.

This sequence belongs to the TtcA family. Homodimer. Requires Mg(2+) as cofactor. [4Fe-4S] cluster serves as cofactor.

The protein localises to the cytoplasm. The enzyme catalyses cytidine(32) in tRNA + S-sulfanyl-L-cysteinyl-[cysteine desulfurase] + AH2 + ATP = 2-thiocytidine(32) in tRNA + L-cysteinyl-[cysteine desulfurase] + A + AMP + diphosphate + H(+). Its pathway is tRNA modification. Its function is as follows. Catalyzes the ATP-dependent 2-thiolation of cytidine in position 32 of tRNA, to form 2-thiocytidine (s(2)C32). The sulfur atoms are provided by the cysteine/cysteine desulfurase (IscS) system. In Chromobacterium violaceum (strain ATCC 12472 / DSM 30191 / JCM 1249 / CCUG 213 / NBRC 12614 / NCIMB 9131 / NCTC 9757 / MK), this protein is tRNA-cytidine(32) 2-sulfurtransferase.